The following is a 404-amino-acid chain: Acetate kinase (404 aa).

Asparagine 7 provides a ligand contact to Mg(2+). Lysine 14 provides a ligand contact to ATP. Arginine 98 lines the substrate pocket. Aspartate 155 (proton donor/acceptor) is an active-site residue. Residues 214–218 (HLGNG), 289–291 (DLR), and 337–341 (GIGEN) each bind ATP. A Mg(2+)-binding site is contributed by glutamate 390.

It belongs to the acetokinase family. In terms of assembly, homodimer. Requires Mg(2+) as cofactor. Mn(2+) is required as a cofactor.

It localises to the cytoplasm. The catalysed reaction is acetate + ATP = acetyl phosphate + ADP. The protein operates within metabolic intermediate biosynthesis; acetyl-CoA biosynthesis; acetyl-CoA from acetate: step 1/2. Functionally, catalyzes the formation of acetyl phosphate from acetate and ATP. Can also catalyze the reverse reaction. The protein is Acetate kinase of Rippkaea orientalis (strain PCC 8801 / RF-1) (Cyanothece sp. (strain PCC 8801)).